Consider the following 227-residue polypeptide: Enolase-phosphatase E1 (227 aa).

The protein belongs to the HAD-like hydrolase superfamily. MasA/MtnC family. As to quaternary structure, monomer. The cofactor is Mg(2+).

It carries out the reaction 5-methylsulfanyl-2,3-dioxopentyl phosphate + H2O = 1,2-dihydroxy-5-(methylsulfanyl)pent-1-en-3-one + phosphate. Its pathway is amino-acid biosynthesis; L-methionine biosynthesis via salvage pathway; L-methionine from S-methyl-5-thio-alpha-D-ribose 1-phosphate: step 3/6. The protein operates within amino-acid biosynthesis; L-methionine biosynthesis via salvage pathway; L-methionine from S-methyl-5-thio-alpha-D-ribose 1-phosphate: step 4/6. In terms of biological role, bifunctional enzyme that catalyzes the enolization of 2,3-diketo-5-methylthiopentyl-1-phosphate (DK-MTP-1-P) into the intermediate 2-hydroxy-3-keto-5-methylthiopentenyl-1-phosphate (HK-MTPenyl-1-P), which is then dephosphorylated to form the acireductone 1,2-dihydroxy-3-keto-5-methylthiopentene (DHK-MTPene). The protein is Enolase-phosphatase E1 of Persephonella marina (strain DSM 14350 / EX-H1).